The chain runs to 394 residues: Chorismate synthase (394 aa).

2 residues coordinate NADP(+): arginine 40 and arginine 46. FMN-binding positions include 135–137, 255–256, glycine 302, 317–321, and arginine 343; these read RAS, QA, and KPISS.

The protein belongs to the chorismate synthase family. Homotetramer. FMNH2 serves as cofactor.

It catalyses the reaction 5-O-(1-carboxyvinyl)-3-phosphoshikimate = chorismate + phosphate. It participates in metabolic intermediate biosynthesis; chorismate biosynthesis; chorismate from D-erythrose 4-phosphate and phosphoenolpyruvate: step 7/7. Its function is as follows. Catalyzes the anti-1,4-elimination of the C-3 phosphate and the C-6 proR hydrogen from 5-enolpyruvylshikimate-3-phosphate (EPSP) to yield chorismate, which is the branch point compound that serves as the starting substrate for the three terminal pathways of aromatic amino acid biosynthesis. This reaction introduces a second double bond into the aromatic ring system. The chain is Chorismate synthase from Parafrankia sp. (strain EAN1pec).